A 364-amino-acid chain; its full sequence is Fructose-bisphosphate aldolase A (364 aa).

T9 is modified (phosphothreonine). A phosphoserine mark is found at S36 and S39. K42 carries the N6-acetyllysine; alternate modification. K42 is covalently cross-linked (Glycyl lysine isopeptide (Lys-Gly) (interchain with G-Cter in SUMO1); alternate). K42 is covalently cross-linked (Glycyl lysine isopeptide (Lys-Gly) (interchain with G-Cter in SUMO2); alternate). R43 lines the beta-D-fructose 1,6-bisphosphate pocket. S46 bears the Phosphoserine mark. At K99 the chain carries N6-(2-hydroxyisobutyryl)lysine. K108 carries the N6-acetyllysine modification. The residue at position 111 (K111) is an N6-acetyllysine; alternate. K111 is modified (N6-malonyllysine; alternate). The residue at position 132 (S132) is a Phosphoserine. N6-(2-hydroxyisobutyryl)lysine is present on K147. The Proton acceptor role is filled by E188. The active-site Schiff-base intermediate with dihydroxyacetone-P is the K230. Position 272 is a phosphoserine (S272). Beta-D-fructose 1,6-bisphosphate contacts are provided by residues 272 to 274 (SGG), S301, and R304. K312 carries the post-translational modification N6-malonyllysine. N6-acetyllysine is present on K330. The residue at position 361 (N361) is a Deamidated asparagine; in form beta.

It belongs to the class I fructose-bisphosphate aldolase family. In terms of assembly, homotetramer. Interacts with SNX9 and WAS. Interacts with FBP2; the interaction blocks FBP2 inhibition by physiological concentrations of AMP and reduces inhibition by Ca(2+). Post-translationally, asn-361 in form alpha is deaminated to Asp in form beta.

It localises to the cytoplasm. It is found in the myofibril. The protein localises to the sarcomere. The protein resides in the i band. Its subcellular location is the m line. It carries out the reaction beta-D-fructose 1,6-bisphosphate = D-glyceraldehyde 3-phosphate + dihydroxyacetone phosphate. The protein operates within carbohydrate degradation; glycolysis; D-glyceraldehyde 3-phosphate and glycerone phosphate from D-glucose: step 4/4. Functionally, plays a key role in glycolysis and gluconeogenesis. In addition, may also function as scaffolding protein. The protein is Fructose-bisphosphate aldolase A (ALDOA) of Oryctolagus cuniculus (Rabbit).